Reading from the N-terminus, the 172-residue chain is Centrin-1 (172 aa).

A disordered region spans residues methionine 1–lysine 30. EF-hand domains follow at residues glutamate 28 to glutamate 63, proline 64 to glutamate 99, aspartate 101 to asparagine 136, and leucine 137 to tyrosine 172. Residues aspartate 41, aspartate 43, serine 45, threonine 47, and glutamate 52 each contribute to the Ca(2+) site. Residues aspartate 150, aspartate 152, aspartate 154, glutamate 156, and glutamate 161 each contribute to the Ca(2+) site.

Belongs to the centrin family. In terms of assembly, monomer. Interacts with CIMAP3. Interacts with USP49.

Its subcellular location is the cytoplasm. It localises to the cytoskeleton. The protein resides in the microtubule organizing center. It is found in the centrosome. Its function is as follows. Plays a fundamental role in microtubule-organizing center structure and function. Plays a role in sperm cilia formation. The protein is Centrin-1 (CETN1) of Bos taurus (Bovine).